The primary structure comprises 94 residues: Small ribosomal subunit protein uS19 (94 aa).

Belongs to the universal ribosomal protein uS19 family.

In terms of biological role, protein S19 forms a complex with S13 that binds strongly to the 16S ribosomal RNA. The polypeptide is Small ribosomal subunit protein uS19 (Nitrosomonas eutropha (strain DSM 101675 / C91 / Nm57)).